The chain runs to 113 residues: T cell receptor alpha variable 36/delta variable 7 (113 aa).

A signal peptide spans 1 to 21 (MMKCPQALLAIFWLLLSWVSS). Residues 23–113 (DKVVQSPLSL…DSAIYLCAVE (91 aa)) enclose the Ig-like domain. N-linked (GlcNAc...) asparagine glycosylation is found at N43 and N96. C44 and C110 are disulfide-bonded.

Alpha-beta TR is a heterodimer composed of an alpha and beta chain; disulfide-linked. The alpha-beta TR is associated with the transmembrane signaling CD3 coreceptor proteins to form the TR-CD3 (TcR or TCR). The assembly of alpha-beta TR heterodimers with CD3 occurs in the endoplasmic reticulum where a single alpha-beta TR heterodimer associates with one CD3D-CD3E heterodimer, one CD3G-CD3E heterodimer and one CD247 homodimer forming a stable octameric structure. CD3D-CD3E and CD3G-CD3E heterodimers preferentially associate with TR alpha and TR beta chains, respectively. The association of the CD247 homodimer is the last step of TcR assembly in the endoplasmic reticulum and is required for transport to the cell surface.

It localises to the cell membrane. In terms of biological role, v region of the variable domain of T cell receptor (TR) alpha chain that participates in the antigen recognition. Alpha-beta T cell receptors are antigen specific receptors which are essential to the immune response and are present on the cell surface of T lymphocytes. Recognize peptide-major histocompatibility (MH) (pMH) complexes that are displayed by antigen presenting cells (APC), a prerequisite for efficient T cell adaptive immunity against pathogens. Binding of alpha-beta TR to pMH complex initiates TR-CD3 clustering on the cell surface and intracellular activation of LCK that phosphorylates the ITAM motifs of CD3G, CD3D, CD3E and CD247 enabling the recruitment of ZAP70. In turn ZAP70 phosphorylates LAT, which recruits numerous signaling molecules to form the LAT signalosome. The LAT signalosome propagates signal branching to three major signaling pathways, the calcium, the mitogen-activated protein kinase (MAPK) kinase and the nuclear factor NF-kappa-B (NF-kB) pathways, leading to the mobilization of transcription factors that are critical for gene expression and essential for T cell growth and differentiation. The T cell repertoire is generated in the thymus, by V-(D)-J rearrangement. This repertoire is then shaped by intrathymic selection events to generate a peripheral T cell pool of self-MH restricted, non-autoaggressive T cells. Post-thymic interaction of alpha-beta TR with the pMH complexes shapes TR structural and functional avidity. The protein is T cell receptor alpha variable 36/delta variable 7 of Homo sapiens (Human).